Consider the following 392-residue polypeptide: uncharacterized protein (392 aa).

This sequence belongs to the chlamydial CPn_0675/CT_696/TC_0068 family.

This is an uncharacterized protein from Chlamydia muridarum (strain MoPn / Nigg).